We begin with the raw amino-acid sequence, 158 residues long: Regulator of sigma D (158 aa).

The protein belongs to the Rsd/AlgQ family. In terms of assembly, interacts with RpoD.

The protein resides in the cytoplasm. In terms of biological role, binds RpoD and negatively regulates RpoD-mediated transcription activation by preventing the interaction between the primary sigma factor RpoD with the catalytic core of the RNA polymerase and with promoter DNA. May be involved in replacement of the RNA polymerase sigma subunit from RpoD to RpoS during the transition from exponential growth to the stationary phase. This Shigella dysenteriae serotype 1 (strain Sd197) protein is Regulator of sigma D.